A 279-amino-acid polypeptide reads, in one-letter code: Phosphate import ATP-binding protein PstB 1 (279 aa).

An ABC transporter domain is found at 26–274 (VMDCKLDKIF…PREQLTSDYI (249 aa)). 59–66 (GPSGCGKS) is an ATP binding site.

Belongs to the ABC transporter superfamily. Phosphate importer (TC 3.A.1.7) family. The complex is composed of two ATP-binding proteins (PstB), two transmembrane proteins (PstC and PstA) and a solute-binding protein (PstS).

The protein localises to the cell inner membrane. The catalysed reaction is phosphate(out) + ATP + H2O = ADP + 2 phosphate(in) + H(+). Its function is as follows. Part of the ABC transporter complex PstSACB involved in phosphate import. Responsible for energy coupling to the transport system. The protein is Phosphate import ATP-binding protein PstB 1 of Pseudomonas putida (strain ATCC 47054 / DSM 6125 / CFBP 8728 / NCIMB 11950 / KT2440).